The following is a 456-amino-acid chain: F-box/FBD/LRR-repeat protein At3g52680 (456 aa).

Positions Lys20–Glu73 constitute an F-box domain. LRR repeat units lie at residues His74 to Phe100, Asn102 to Phe127, Thr152 to Phe179, Val180 to Arg205, Thr225 to Glu252, Ile270 to Leu295, and Thr318 to Asp344. One can recognise an FBD domain in the interval Lys358–Thr409.

This Arabidopsis thaliana (Mouse-ear cress) protein is F-box/FBD/LRR-repeat protein At3g52680.